The primary structure comprises 194 residues: Molybdenum cofactor guanylyltransferase (194 aa).

GTP-binding positions include 12–14 (LAG), Lys25, Asn53, Asp70, and Asp100. Residue Asp100 coordinates Mg(2+).

It belongs to the MobA family. As to quaternary structure, monomer. It depends on Mg(2+) as a cofactor.

Its subcellular location is the cytoplasm. It catalyses the reaction Mo-molybdopterin + GTP + H(+) = Mo-molybdopterin guanine dinucleotide + diphosphate. Functionally, transfers a GMP moiety from GTP to Mo-molybdopterin (Mo-MPT) cofactor (Moco or molybdenum cofactor) to form Mo-molybdopterin guanine dinucleotide (Mo-MGD) cofactor. The protein is Molybdenum cofactor guanylyltransferase of Aliivibrio fischeri (strain ATCC 700601 / ES114) (Vibrio fischeri).